A 210-amino-acid polypeptide reads, in one-letter code: MPAIESGLLALILTGVLGYLLGSIPFGIVITRAFGLGDLRRIGSGNIGATNVLRTGNRPAALATLLLDSGKGAIAVLIARAAVGEDAAQLAAFTSFLGHLYPVWLGFRGGKGVATFLGTLIALAWPVGLACCLTWLATAAVSRISSLSALMAAASGVVWMLLLGQGQMAALGLVLAVLIFIRHHENIRRIANGTEPRIGKKASQDQSAEQ.

The next 5 membrane-spanning stretches (helical) occupy residues 10–30, 59–79, 87–107, 116–136, and 161–181; these read ALILTGVLGYLLGSIPFGIVI, PAALATLLLDSGKGAIAVLIA, AAQLAAFTSFLGHLYPVWLGF, FLGTLIALAWPVGLACCLTWL, and LLLGQGQMAALGLVLAVLIFI.

The protein belongs to the PlsY family. As to quaternary structure, probably interacts with PlsX.

It is found in the cell inner membrane. It catalyses the reaction an acyl phosphate + sn-glycerol 3-phosphate = a 1-acyl-sn-glycero-3-phosphate + phosphate. It participates in lipid metabolism; phospholipid metabolism. Its function is as follows. Catalyzes the transfer of an acyl group from acyl-phosphate (acyl-PO(4)) to glycerol-3-phosphate (G3P) to form lysophosphatidic acid (LPA). This enzyme utilizes acyl-phosphate as fatty acyl donor, but not acyl-CoA or acyl-ACP. The polypeptide is Glycerol-3-phosphate acyltransferase (Cereibacter sphaeroides (strain ATCC 17025 / ATH 2.4.3) (Rhodobacter sphaeroides)).